The primary structure comprises 643 residues: Mediator of RNA polymerase II transcription subunit 17 (643 aa).

The interval S53–K82 is disordered. A compositionally biased stretch (basic and acidic residues) spans A60 to E73.

This sequence belongs to the Mediator complex subunit 17 family. Component of the Mediator complex.

The protein resides in the nucleus. Component of the Mediator complex, a coactivator involved in the regulated transcription of nearly all RNA polymerase II-dependent genes. Mediator functions as a bridge to convey information from gene-specific regulatory proteins to the basal RNA polymerase II transcription machinery. Mediator is recruited to promoters by direct interactions with regulatory proteins and serves as a scaffold for the assembly of a functional preinitiation complex with RNA polymerase II and the general transcription factors. The chain is Mediator of RNA polymerase II transcription subunit 17 (med17) from Danio rerio (Zebrafish).